The following is a 178-amino-acid chain: Zinc finger CCHC domain-containing protein 10 (178 aa).

A CCHC-type zinc finger spans residues 21 to 38; the sequence is VRCQKCLEFGHWTYECKG. Residues 66-178 form a disordered region; it reads QSIGETNIEK…EPQKKKKKKK (113 aa). 2 stretches are compositionally biased toward low complexity: residues 85–113 and 121–164; these read SVTS…SSSS and SLSS…SSES.

This Mus musculus (Mouse) protein is Zinc finger CCHC domain-containing protein 10 (Zcchc10).